The sequence spans 403 residues: Signal-transducing adaptor protein 2 (403 aa).

The PH domain occupies 18 to 130 (PSHYYESFLE…VPTDLTLLPG (113 aa)). Tyr-22 is subject to Phosphotyrosine; by SRC. The SH2 domain maps to 133-248 (YMMSEVLAKE…KALVPFLLDE (116 aa)). The residue at position 250 (Tyr-250) is a Phosphotyrosine; by PTK6. The disordered stretch occupies residues 270 to 308 (APSAPGPGPAPCTGGPKPLSPASSQDKLPPLPPLPNQEE). Tyr-310 carries the phosphotyrosine modification. Position 322 is a phosphotyrosine; by SRC (Tyr-322). A disordered region spans residues 331 to 374 (SWPVILKPKKLPKPPAKLPKPPVGPKPEPKVFNGGLGRKLPVSS). Positions 343–356 (KPPAKLPKPPVGPK) are enriched in pro residues. A coiled-coil region spans residues 382–402 (AGLADMTAELQKKLEKRRALE).

Interacts with PTK6 and CSF1R. Phosphorylated on tyrosine. Tyr-250 may be important for interaction with kinases. Phosphorylated by PTK6 at Tyr-250 modulates PTK6-mediated STAT3 activation. Tyr-22 and Tyr-322 appears to be phosphorylated by SRC. Widely expressed.

It localises to the cytoplasm. Substrate of protein kinase PTK6. May play a regulatory role in the acute-phase response in systemic inflammation and may modulate STAT3 activity. The polypeptide is Signal-transducing adaptor protein 2 (STAP2) (Homo sapiens (Human)).